A 607-amino-acid chain; its full sequence is Translation initiation factor IF-2 (607 aa).

The disordered stretch occupies residues 54–93 (SAPQAQDSTPVAETPAAAQPAAPQAASSQPAAAQAAQAVA). The span at 62–93 (TPVAETPAAAQPAAPQAASSQPAAAQAAQAVA) shows a compositional bias: low complexity. Residues 108–281 (HRAPVVTIMG…ELEDLRADPK (174 aa)) form the tr-type G domain. A G1 region spans residues 117–124 (GHVDHGKT). 117–124 (GHVDHGKT) contributes to the GTP binding site. The interval 142 to 146 (GITQH) is G2. A G3 region spans residues 163–166 (DTPG). GTP is bound by residues 163-167 (DTPGH) and 217-220 (NKVD). The segment at 217–220 (NKVD) is G4. Residues 253–255 (SAK) form a G5 region.

The protein belongs to the TRAFAC class translation factor GTPase superfamily. Classic translation factor GTPase family. IF-2 subfamily.

The protein localises to the cytoplasm. In terms of biological role, one of the essential components for the initiation of protein synthesis. Protects formylmethionyl-tRNA from spontaneous hydrolysis and promotes its binding to the 30S ribosomal subunits. Also involved in the hydrolysis of GTP during the formation of the 70S ribosomal complex. This Deinococcus deserti (strain DSM 17065 / CIP 109153 / LMG 22923 / VCD115) protein is Translation initiation factor IF-2.